Here is a 73-residue protein sequence, read N- to C-terminus: Translation initiation factor IF-1 (73 aa).

The S1-like domain occupies 1–73 (MAKKEDTLVL…TKARVVYRHR (73 aa)).

The protein belongs to the IF-1 family. Component of the 30S ribosomal translation pre-initiation complex which assembles on the 30S ribosome in the order IF-2 and IF-3, IF-1 and N-formylmethionyl-tRNA(fMet); mRNA recruitment can occur at any time during PIC assembly.

It is found in the cytoplasm. Its function is as follows. One of the essential components for the initiation of protein synthesis. Stabilizes the binding of IF-2 and IF-3 on the 30S subunit to which N-formylmethionyl-tRNA(fMet) subsequently binds. Helps modulate mRNA selection, yielding the 30S pre-initiation complex (PIC). Upon addition of the 50S ribosomal subunit IF-1, IF-2 and IF-3 are released leaving the mature 70S translation initiation complex. This chain is Translation initiation factor IF-1, found in Chlamydia pneumoniae (Chlamydophila pneumoniae).